The chain runs to 160 residues: Ribosomal RNA large subunit methyltransferase H (160 aa).

S-adenosyl-L-methionine contacts are provided by residues leucine 76, glycine 108, and 127-132 (LGKMTW).

It belongs to the RNA methyltransferase RlmH family. Homodimer.

It localises to the cytoplasm. The enzyme catalyses pseudouridine(1915) in 23S rRNA + S-adenosyl-L-methionine = N(3)-methylpseudouridine(1915) in 23S rRNA + S-adenosyl-L-homocysteine + H(+). Its function is as follows. Specifically methylates the pseudouridine at position 1915 (m3Psi1915) in 23S rRNA. The chain is Ribosomal RNA large subunit methyltransferase H from Rhizobium rhizogenes (strain K84 / ATCC BAA-868) (Agrobacterium radiobacter).